The following is a 261-amino-acid chain: MASNNDSIKKTLGVVVGLSLVCSIIVSTAAVGLRDQQKANAVLDKQSKIVEVAGIDAEGKKVPELFAEYIEPRLVDFKTGDFVEKAEDGSTAANYDQRKAAKDPAESIKLTADEDKAKILRRANTGIVYLVKNGDDISKVIIPVHGNGLWSMMYAFVAVETDGNTVSGITYYEQGETPGLGGEVENPVWRAQFVGKKLFDENHKPAIKIVKGGAPEGSEHGVDGLSGATLTGNGVQGTFDFWLGDMGFGPFLAKVRDGGLN.

The chain crosses the membrane as a helical span at residues 12 to 32 (LGVVVGLSLVCSIIVSTAAVG). At threonine 229 the chain carries FMN phosphoryl threonine.

As to quaternary structure, composed of six subunits; NqrA, NqrB, NqrC, NqrD, NqrE and NqrF. Requires FMN as cofactor.

The protein localises to the cell inner membrane. The catalysed reaction is a ubiquinone + n Na(+)(in) + NADH + H(+) = a ubiquinol + n Na(+)(out) + NAD(+). In terms of biological role, NQR complex catalyzes the reduction of ubiquinone-1 to ubiquinol by two successive reactions, coupled with the transport of Na(+) ions from the cytoplasm to the periplasm. NqrA to NqrE are probably involved in the second step, the conversion of ubisemiquinone to ubiquinol. The chain is Na(+)-translocating NADH-quinone reductase subunit C from Vibrio campbellii (strain ATCC BAA-1116).